A 362-amino-acid chain; its full sequence is E3 ubiquitin-protein ligase rififylin (362 aa).

The segment at 17-37 is disordered; the sequence is ETPPPQGARTQAYSNPGYSSF. The span at 24 to 37 shows a compositional bias: polar residues; sequence ARTQAYSNPGYSSF. Residues 41–93 form an FYVE-type zinc finger; sequence TGSEPSCKACGVHFASTTRKQTCLDCKKNFCMTCSSQEGNGPRLCLLCLRFRA. In terms of domain architecture, SAP 1 spans 101 to 120; sequence LMKMKVKDLRDYLSLHDIST. Residues 162 to 183 form a disordered region; sequence LTQPQSSTVPPTSPGLPSSPAQ. Phosphoserine is present on residues Ser225, Ser228, Ser231, and Ser239. Residues 249 to 263 form the SAP 2 domain; it reads IEGLTVRQLKEILAR. The RING-type zinc finger occupies 315-350; sequence CKICMDSPIDCVLLECGHMVTCTKCGKRMNECPICR.

As to quaternary structure, interacts with CASP8 and CASP10. Interacts with RIPK1 (via protein kinase domain); involved in RIPK1 ubiquitination. Interacts with PRR5L. Interacts (via RING-type zinc finger) with p53/TP53; involved in p53/TP53 ubiquitination. Interacts (via RING-type zinc finger) with MDM2; the interaction stabilizes MDM2. Post-translationally, autoubiquitinated. In terms of processing, palmitoylated. Undergoes caspase-mediated cleavage upon death-receptor activation, by TNFSF10 for instance. May be mediated by the caspases CASP8 and CASP10 in a negative feedback loop. In terms of tissue distribution, ubiquitous. Detected in cerebrum, cerebellum, midbrain, brain stem, hippocampus, striatum, liver, heart, lung, kidney, muscle, spleen and testis.

It is found in the cytoplasm. The protein localises to the cytosol. Its subcellular location is the cell membrane. The protein resides in the recycling endosome membrane. The enzyme catalyses S-ubiquitinyl-[E2 ubiquitin-conjugating enzyme]-L-cysteine + [acceptor protein]-L-lysine = [E2 ubiquitin-conjugating enzyme]-L-cysteine + N(6)-ubiquitinyl-[acceptor protein]-L-lysine.. It functions in the pathway protein modification; protein ubiquitination. In terms of biological role, E3 ubiquitin-protein ligase that regulates several biological processes through the ubiquitin-mediated proteasomal degradation of various target proteins. Mediates 'Lys-48'-linked polyubiquitination of PRR5L and its subsequent proteasomal degradation thereby indirectly regulating cell migration through the mTORC2 complex. Also ubiquitinates the caspases CASP8 and CASP10, promoting their proteasomal degradation, to negatively regulate apoptosis downstream of death domain receptors. Also negatively regulates the tumor necrosis factor-mediated signaling pathway through targeting of RIPK1 to ubiquitin-mediated proteasomal degradation. Negatively regulates p53/TP53 through its direct ubiquitination and targeting to proteasomal degradation. Indirectly, may also negatively regulate p53/TP53 through ubiquitination and degradation of SFN. May also play a role in endocytic recycling. The chain is E3 ubiquitin-protein ligase rififylin from Rattus norvegicus (Rat).